Here is a 398-residue protein sequence, read N- to C-terminus: tRNA-specific 2-thiouridylase MnmA (398 aa).

ATP is bound by residues G33 to S40 and M59. The interval N119 to D121 is interaction with target base in tRNA. C124 (nucleophile) is an active-site residue. A disulfide bridge connects residues C124 and C226. G148 serves as a coordination point for ATP. The interaction with tRNA stretch occupies residues K176–Q178. C226 functions as the Cysteine persulfide intermediate in the catalytic mechanism. The segment at R343–Y344 is interaction with tRNA.

Belongs to the MnmA/TRMU family.

It is found in the cytoplasm. It carries out the reaction S-sulfanyl-L-cysteinyl-[protein] + uridine(34) in tRNA + AH2 + ATP = 2-thiouridine(34) in tRNA + L-cysteinyl-[protein] + A + AMP + diphosphate + H(+). Functionally, catalyzes the 2-thiolation of uridine at the wobble position (U34) of tRNA, leading to the formation of s(2)U34. This Psychrobacter sp. (strain PRwf-1) protein is tRNA-specific 2-thiouridylase MnmA.